The primary structure comprises 308 residues: Elongation factor Ts (308 aa).

Positions 80-83 (TDFV) are involved in Mg(2+) ion dislocation from EF-Tu.

The protein belongs to the EF-Ts family.

It localises to the cytoplasm. Functionally, associates with the EF-Tu.GDP complex and induces the exchange of GDP to GTP. It remains bound to the aminoacyl-tRNA.EF-Tu.GTP complex up to the GTP hydrolysis stage on the ribosome. The chain is Elongation factor Ts from Rhodopseudomonas palustris (strain BisB5).